Consider the following 182-residue polypeptide: Protein SYM1 (182 aa).

Transmembrane regions (helical) follow at residues 51 to 70, 98 to 118, and 135 to 155; these read TLRPFLYGAVLFSLVGDKWY, LIFAPIGVPLYYTAMALMEGG, and LLANWIVWPAFQLCNFSLVPV.

It belongs to the peroxisomal membrane protein PXMP2/4 family.

Its subcellular location is the mitochondrion inner membrane. In terms of biological role, may be involved in cellular response to stress. Required to maintain mitochondrial DNA (mtDNA) integrity and stability. The sequence is that of Protein SYM1 (SYM1) from Eremothecium gossypii (strain ATCC 10895 / CBS 109.51 / FGSC 9923 / NRRL Y-1056) (Yeast).